The sequence spans 155 residues: Small ribosomal subunit protein uS7cz/uS7cy (155 aa).

It belongs to the universal ribosomal protein uS7 family. Part of the 30S ribosomal subunit.

It is found in the plastid. Its subcellular location is the chloroplast. Functionally, one of the primary rRNA binding proteins, it binds directly to 16S rRNA where it nucleates assembly of the head domain of the 30S subunit. The protein is Small ribosomal subunit protein uS7cz/uS7cy (rps7-A) of Anthoceros angustus (Hornwort).